The following is a 63-amino-acid chain: Protein Wfdc21 (63 aa).

The first 24 residues, 1–24 (MKLGAFLLLVSLITLSLEVQELQA), serve as a signal peptide directing secretion. A WAP; atypical domain is found at 25–63 (AVRPLQLLGTCAELCRGDWDCGPEEQCVSIGCSHICTTN). 3 disulfides stabilise this stretch: cysteine 35–cysteine 56, cysteine 39–cysteine 51, and cysteine 45–cysteine 60.

Predominantly expressed in white adipose tissue and liver.

The protein resides in the secreted. Its function is as follows. May promote activation of the metalloproteinase MMP2. The chain is Protein Wfdc21 from Mus musculus (Mouse).